The following is a 377-amino-acid chain: MTEKKLHVALLFGGNSSEHDVSKRSAHNIYDGMDKDKYDVSIFMFTKDGILLDNEASQRIFDGEPEDQVVQEAYQKMDLDAPLAPIAALSTVKEIDFFYPVIHGNLGEDGTVQGLFRLLKKPYIGSGIASSAMSFDKDLTKRILNQAGIRNTKYLLVTPQNKDQYSWSRIKEELGDLVFVKPAKQGSSVGIHKVDTEEEYETAMKDAFTYDYKVLVEAGIKNPREIEISILGNENPIASKLGGIRVPEGDEFYDYENKFVDASGVVFDLPVIVDDDLAKEITDMALKAYEALGMKGMARIDFLVDEDGVPYLGEPNTLPGFTNISLYPQMWNISGISYSELIDRLIQLGIEEFEYEGQLRYDFKALGVEKVGEKRYN.

One can recognise an ATP-grasp domain in the interval 141-347 (KRILNQAGIR…YSELIDRLIQ (207 aa)). 171–226 (KEELGDLVFVKPAKQGSSVGIHKVDTEEEYETAMKDAFTYDYKVLVEAGIKNPREI) contacts ATP. Residues Asp301, Glu314, and Asn316 each contribute to the Mg(2+) site.

The protein belongs to the D-alanine--D-alanine ligase family. It depends on Mg(2+) as a cofactor. The cofactor is Mn(2+).

Its subcellular location is the cytoplasm. The catalysed reaction is 2 D-alanine + ATP = D-alanyl-D-alanine + ADP + phosphate + H(+). The protein operates within cell wall biogenesis; peptidoglycan biosynthesis. Its function is as follows. Cell wall formation. This Limosilactobacillus fermentum (strain NBRC 3956 / LMG 18251) (Lactobacillus fermentum) protein is D-alanine--D-alanine ligase.